The chain runs to 105 residues: MNKFYIYNSFKHEALINVKVKPYAKQNLIGNFVIINNIPYIKLAIKATPEQGKANEGIIHYLAKEWELSRSSIEIIKGHTHSLKTILIKNINEDYLNLIINAYIK.

The protein belongs to the UPF0235 family.

This is UPF0235 protein RP839 from Rickettsia prowazekii (strain Madrid E).